We begin with the raw amino-acid sequence, 143 residues long: Large ribosomal subunit protein uL15 (143 aa).

Positions 1–56 are disordered; it reads MQLNSIKPAAGAKHAKRRVGRGIGSGLGKTAGRGHKGQKSRAGGYHKVGFEGGQMP. A compositionally biased stretch (gly residues) spans 21-31; sequence RGIGSGLGKTA.

This sequence belongs to the universal ribosomal protein uL15 family. In terms of assembly, part of the 50S ribosomal subunit.

Functionally, binds to the 23S rRNA. This is Large ribosomal subunit protein uL15 from Verminephrobacter eiseniae (strain EF01-2).